A 374-amino-acid polypeptide reads, in one-letter code: tRNA-specific 2-thiouridylase MnmA (374 aa).

Residues 13-20 (GMSGGVDS) and M39 each bind ATP. The segment at 99–101 (NPD) is interaction with target base in tRNA. The Nucleophile role is filled by C104. A disulfide bond links C104 and C201. Residue G128 participates in ATP binding. An interaction with tRNA region spans residues 151 to 153 (KDQ). The active-site Cysteine persulfide intermediate is C201. Residues 313–314 (RY) form an interaction with tRNA region.

The protein belongs to the MnmA/TRMU family.

Its subcellular location is the cytoplasm. The catalysed reaction is S-sulfanyl-L-cysteinyl-[protein] + uridine(34) in tRNA + AH2 + ATP = 2-thiouridine(34) in tRNA + L-cysteinyl-[protein] + A + AMP + diphosphate + H(+). Its function is as follows. Catalyzes the 2-thiolation of uridine at the wobble position (U34) of tRNA, leading to the formation of s(2)U34. This is tRNA-specific 2-thiouridylase MnmA from Streptococcus equi subsp. zooepidemicus (strain H70).